Consider the following 361-residue polypeptide: 3-dehydroquinate synthase (361 aa).

NAD(+) is bound by residues 71–76 (DGEQNK), 105–109 (GVIGD), 129–130 (TT), K142, K151, and 169–172 (CLNT). 3 residues coordinate Zn(2+): E184, H247, and H264.

The protein belongs to the sugar phosphate cyclases superfamily. Dehydroquinate synthase family. The cofactor is Co(2+). Zn(2+) is required as a cofactor. It depends on NAD(+) as a cofactor.

The protein localises to the cytoplasm. The catalysed reaction is 7-phospho-2-dehydro-3-deoxy-D-arabino-heptonate = 3-dehydroquinate + phosphate. Its pathway is metabolic intermediate biosynthesis; chorismate biosynthesis; chorismate from D-erythrose 4-phosphate and phosphoenolpyruvate: step 2/7. Catalyzes the conversion of 3-deoxy-D-arabino-heptulosonate 7-phosphate (DAHP) to dehydroquinate (DHQ). The protein is 3-dehydroquinate synthase of Sodalis glossinidius (strain morsitans).